Reading from the N-terminus, the 206-residue chain is LexA repressor (206 aa).

Positions 28 to 48 (RAEIARRLGFKSANAAEEHLK) form a DNA-binding region, H-T-H motif. Active-site for autocatalytic cleavage activity residues include Ser-123 and Lys-160.

This sequence belongs to the peptidase S24 family. Homodimer.

The catalysed reaction is Hydrolysis of Ala-|-Gly bond in repressor LexA.. In terms of biological role, represses a number of genes involved in the response to DNA damage (SOS response), including recA and lexA. In the presence of single-stranded DNA, RecA interacts with LexA causing an autocatalytic cleavage which disrupts the DNA-binding part of LexA, leading to derepression of the SOS regulon and eventually DNA repair. The polypeptide is LexA repressor (Shewanella piezotolerans (strain WP3 / JCM 13877)).